A 448-amino-acid polypeptide reads, in one-letter code: MTSPIVTLKSVEQQQDLIITPPTTGLSLTGKITIPGDKSISHRALMLGAIAQGETIIKGLLLGEDPHSTAKCFRAMGAEISPLNTDKIIVKGIGLGNLQEPVDVLDAGNSGTTMRLMLGLLASHPERFFTVTGDSSLRSRPMSRVIKPLQQMGAQIWGRKQNSLAPLAISGQSLQPIHYHSPIASAQVKSCILLAGLSVEGKTTVTEPALSRDHSERMLKAFGANLEIDPQTHSVTVMGPSRLTGQTVIVPGDISSAAFWLVAGSIVPGSDLLIENVGINPTRTGILEVLEMMGADLTLLNQREITGEPVADIRVKHSQLKACTISGDIVPRLIDEIPILAVAAVFAQGTTVIRDAQELRVKESDRLAVMACELNQMGAKITELPDGLEITGPVSLKGSQVDSYTDHRIAMSLAIAALNASHSTTIHRAQAAAVSYPEFITTLQQLCQ.

3 residues coordinate 3-phosphoshikimate: Lys-38, Ser-39, and Arg-43. Residue Lys-38 participates in phosphoenolpyruvate binding. Residues Gly-111 and Arg-140 each contribute to the phosphoenolpyruvate site. Residues Ser-185, Gln-187, Asp-335, and Lys-362 each contribute to the 3-phosphoshikimate site. Gln-187 serves as a coordination point for phosphoenolpyruvate. Catalysis depends on Asp-335, which acts as the Proton acceptor. Residues Arg-366 and Arg-408 each coordinate phosphoenolpyruvate.

Belongs to the EPSP synthase family. As to quaternary structure, monomer.

Its subcellular location is the cytoplasm. It carries out the reaction 3-phosphoshikimate + phosphoenolpyruvate = 5-O-(1-carboxyvinyl)-3-phosphoshikimate + phosphate. It functions in the pathway metabolic intermediate biosynthesis; chorismate biosynthesis; chorismate from D-erythrose 4-phosphate and phosphoenolpyruvate: step 6/7. Functionally, catalyzes the transfer of the enolpyruvyl moiety of phosphoenolpyruvate (PEP) to the 5-hydroxyl of shikimate-3-phosphate (S3P) to produce enolpyruvyl shikimate-3-phosphate and inorganic phosphate. This chain is 3-phosphoshikimate 1-carboxyvinyltransferase, found in Gloeothece citriformis (strain PCC 7424) (Cyanothece sp. (strain PCC 7424)).